The following is a 548-amino-acid chain: Chaperonin GroEL (548 aa).

Residues 30-33 (TLGP), lysine 51, 87-91 (DGTTT), glycine 415, 479-481 (NAA), and aspartate 495 contribute to the ATP site.

Belongs to the chaperonin (HSP60) family. Forms a cylinder of 14 subunits composed of two heptameric rings stacked back-to-back. Interacts with the co-chaperonin GroES.

It is found in the cytoplasm. It carries out the reaction ATP + H2O + a folded polypeptide = ADP + phosphate + an unfolded polypeptide.. Its function is as follows. Together with its co-chaperonin GroES, plays an essential role in assisting protein folding. The GroEL-GroES system forms a nano-cage that allows encapsulation of the non-native substrate proteins and provides a physical environment optimized to promote and accelerate protein folding. The protein is Chaperonin GroEL of Sodalis glossinidius (strain morsitans).